The chain runs to 160 residues: Transcriptional repressor NrdR (160 aa).

The segment at 3–34 (CPSCQNTDSRVLESRAADGGRSVRRRRECLNC) is a zinc-finger region. Residues 49-139 (ITVIKRNGNR…VYRQFRGIDD (91 aa)) form the ATP-cone domain.

The protein belongs to the NrdR family. Zn(2+) is required as a cofactor.

Negatively regulates transcription of bacterial ribonucleotide reductase nrd genes and operons by binding to NrdR-boxes. The protein is Transcriptional repressor NrdR of Synechococcus sp. (strain CC9605).